Reading from the N-terminus, the 190-residue chain is Putative transcription factor ovo-like protein 3 (190 aa).

Disordered stretches follow at residues 1 to 21 (MPRA…GHLP) and 35 to 65 (SLGG…SAPR). Residues 41–62 (AQQSSSVRDPWTAQPTQGNLTS) show a composition bias toward polar residues. C2H2-type zinc fingers lie at residues 70-92 (LGCP…LKCH), 98-120 (HLCR…MRTH), 126-149 (FRCS…AKVH), and 165-187 (HVCE…RALH).

Belongs to the krueppel C2H2-type zinc-finger protein family.

It localises to the nucleus. May act as a transcription regulator. In Homo sapiens (Human), this protein is Putative transcription factor ovo-like protein 3 (OVOL3).